The primary structure comprises 122 residues: Ribosome-binding factor A (122 aa).

The protein belongs to the RbfA family. Monomer. Binds 30S ribosomal subunits, but not 50S ribosomal subunits or 70S ribosomes.

The protein localises to the cytoplasm. In terms of biological role, one of several proteins that assist in the late maturation steps of the functional core of the 30S ribosomal subunit. Associates with free 30S ribosomal subunits (but not with 30S subunits that are part of 70S ribosomes or polysomes). Required for efficient processing of 16S rRNA. May interact with the 5'-terminal helix region of 16S rRNA. This is Ribosome-binding factor A from Geotalea uraniireducens (strain Rf4) (Geobacter uraniireducens).